Here is a 373-residue protein sequence, read N- to C-terminus: Spermidine/putrescine import ATP-binding protein PotA (373 aa).

The region spanning 6–236 is the ABC transporter domain; sequence LSLSNLTKQF…PANLFTARFV (231 aa). Residue 38–45 participates in ATP binding; that stretch reads GPSGCGKT.

The protein belongs to the ABC transporter superfamily. Spermidine/putrescine importer (TC 3.A.1.11.1) family. As to quaternary structure, the complex is composed of two ATP-binding proteins (PotA), two transmembrane proteins (PotB and PotC) and a solute-binding protein (PotD).

It is found in the cell inner membrane. It carries out the reaction ATP + H2O + polyamine-[polyamine-binding protein]Side 1 = ADP + phosphate + polyamineSide 2 + [polyamine-binding protein]Side 1.. Part of the ABC transporter complex PotABCD involved in spermidine/putrescine import. Responsible for energy coupling to the transport system. In Marinobacter nauticus (strain ATCC 700491 / DSM 11845 / VT8) (Marinobacter aquaeolei), this protein is Spermidine/putrescine import ATP-binding protein PotA.